The following is a 365-amino-acid chain: Peptide chain release factor 2 (365 aa).

Glutamine 252 bears the N5-methylglutamine mark.

Belongs to the prokaryotic/mitochondrial release factor family. Methylated by PrmC. Methylation increases the termination efficiency of RF2.

The protein localises to the cytoplasm. Its function is as follows. Peptide chain release factor 2 directs the termination of translation in response to the peptide chain termination codons UGA and UAA. The chain is Peptide chain release factor 2 from Yersinia enterocolitica serotype O:8 / biotype 1B (strain NCTC 13174 / 8081).